The primary structure comprises 70 residues: Small ribosomal subunit protein bS21 (70 aa).

It belongs to the bacterial ribosomal protein bS21 family.

This is Small ribosomal subunit protein bS21 from Azoarcus sp. (strain BH72).